We begin with the raw amino-acid sequence, 252 residues long: Trans-aconitate 2-methyltransferase (252 aa).

This sequence belongs to the methyltransferase superfamily. Tam family.

Its subcellular location is the cytoplasm. It carries out the reaction trans-aconitate + S-adenosyl-L-methionine = (E)-3-(methoxycarbonyl)pent-2-enedioate + S-adenosyl-L-homocysteine. Its function is as follows. Catalyzes the S-adenosylmethionine monomethyl esterification of trans-aconitate. In Escherichia coli (strain UTI89 / UPEC), this protein is Trans-aconitate 2-methyltransferase.